A 72-amino-acid chain; its full sequence is Translation initiation factor IF-1 (72 aa).

The S1-like domain occupies Ala-2–Arg-72.

Belongs to the IF-1 family. In terms of assembly, component of the 30S ribosomal translation pre-initiation complex which assembles on the 30S ribosome in the order IF-2 and IF-3, IF-1 and N-formylmethionyl-tRNA(fMet); mRNA recruitment can occur at any time during PIC assembly.

It is found in the cytoplasm. In terms of biological role, one of the essential components for the initiation of protein synthesis. Stabilizes the binding of IF-2 and IF-3 on the 30S subunit to which N-formylmethionyl-tRNA(fMet) subsequently binds. Helps modulate mRNA selection, yielding the 30S pre-initiation complex (PIC). Upon addition of the 50S ribosomal subunit IF-1, IF-2 and IF-3 are released leaving the mature 70S translation initiation complex. The polypeptide is Translation initiation factor IF-1 (Haemophilus influenzae (strain ATCC 51907 / DSM 11121 / KW20 / Rd)).